Reading from the N-terminus, the 323-residue chain is Large ribosomal subunit protein uL10x (323 aa).

A disordered region spans residues 287-323 (DAGGGSAQAGAAAKVEEKKEESDEEDYEGGFGLFDEE). Ser-308 is subject to Phosphoserine. The span at 308–323 (SDEEDYEGGFGLFDEE) shows a compositional bias: acidic residues. Position 313 is a phosphotyrosine (Tyr-313).

Belongs to the universal ribosomal protein uL10 family. In terms of assembly, P0 forms a pentameric complex by interaction with dimers of P1 and P2.

Its function is as follows. Ribosomal protein P0 is the functional equivalent of E.coli protein L10. The chain is Large ribosomal subunit protein uL10x (RPP0C) from Arabidopsis thaliana (Mouse-ear cress).